We begin with the raw amino-acid sequence, 1027 residues long: Xyloglucanase (1027 aa).

The first 32 residues, 1–32 (MKTFLGKKLWMASLAVALAAGSFAALPEMTSA), serve as a signal peptide directing secretion. Residue aspartate 70 is the Nucleophile of the active site. 4 BNR repeats span residues 134–143 (RSTDRGDTWQ), 185–196 (WRSSDYGATWSK), 252–262 (YRSTDGGATWT), and 357–367 (FRSKDGGTTWT). The Proton donor role is filled by aspartate 479. BNR repeat units lie at residues 537-545 (SSDGGTNWY) and 717-727 (FRSDDGGASWV). In terms of domain architecture, CBM3 spans 876-1027 (PEGSIRIEMY…SGTLQWGIEP (152 aa)).

It belongs to the glycosyl hydrolase 74 family.

In terms of biological role, hydrolyzes the glucosidic bonds of unbranched Glc residues in tamarind seed xyloglucan, producing XXXG, XLXG, XXLG and XLLG. May have a dual endo- and exo- mode of action towards xyloglucan, or may have an endo-processive mode of action. The sequence is that of Xyloglucanase from Paenibacillus sp.